The sequence spans 404 residues: Argininosuccinate synthase (404 aa).

ATP-binding positions include 12–20 (AYSGGLDTS) and Ala40. L-citrulline is bound by residues Tyr92 and Ser97. Residue Gly122 coordinates ATP. Residues Thr124, Asn128, and Asp129 each contribute to the L-aspartate site. Asn128 serves as a coordination point for L-citrulline. L-citrulline is bound by residues Arg132, Ser181, Ser190, Glu266, and Tyr278.

This sequence belongs to the argininosuccinate synthase family. Type 1 subfamily. Homotetramer.

The protein resides in the cytoplasm. The catalysed reaction is L-citrulline + L-aspartate + ATP = 2-(N(omega)-L-arginino)succinate + AMP + diphosphate + H(+). It participates in amino-acid biosynthesis; L-arginine biosynthesis; L-arginine from L-ornithine and carbamoyl phosphate: step 2/3. This is Argininosuccinate synthase from Erwinia tasmaniensis (strain DSM 17950 / CFBP 7177 / CIP 109463 / NCPPB 4357 / Et1/99).